Here is a 113-residue protein sequence, read N- to C-terminus: Iron-sulfur cluster insertion protein ErpA (113 aa).

C41, C105, and C107 together coordinate iron-sulfur cluster.

It belongs to the HesB/IscA family. As to quaternary structure, homodimer. The cofactor is iron-sulfur cluster.

In terms of biological role, required for insertion of 4Fe-4S clusters for at least IspG. In Aliivibrio salmonicida (strain LFI1238) (Vibrio salmonicida (strain LFI1238)), this protein is Iron-sulfur cluster insertion protein ErpA.